We begin with the raw amino-acid sequence, 63 residues long: Large ribosomal subunit protein uL29 (63 aa).

This sequence belongs to the universal ribosomal protein uL29 family.

The protein is Large ribosomal subunit protein uL29 of Aliarcobacter butzleri (strain RM4018) (Arcobacter butzleri).